Here is a 388-residue protein sequence, read N- to C-terminus: MTTTEEAPKSPLFEAIDKNDTEAALALLKTKEQAAQRDPSGMSVLAAAAYRGNLTLVEKAIELKCDVNDKTDGTLYTPLMFAALSGKQDVCRLLMDSGARMYLVNGIGKTASELAAFVGHHECVAIINNHITIDVIEDLLRPKVNGKYEGAEEYPDELAVFIHSLCGSHEIHPVKIIFRFSKYPDSLKYKKKILYVIDRVFEKQLRCKESNEIMSLKLWLILFSMRETSKFVESNKEKSPEEASLQYAKLISTWQEGDETRRALDVMLRNAVASFPYKHSLLHDTLQKALQKSQIGERPSAYEYIVQALFGQRIAAVCQFCSVCGHPGAKKRCTQCKLAYCSQECQKFDWPIHKKVCSFLKTRQEVSPTDETAMSLDDIQAQIAKIDV.

3 ANK repeats span residues 40–69 (SGMSVLAAAAYRGNLTLVEKAIELKCDVND), 74–103 (TLYTPLMFAALSGKQDVCRLLMDSGARMYL), and 107–137 (IGKTASELAAFVGHHECVAIINNHITIDVIE). Zn(2+)-binding residues include Cys-321, Cys-324, Cys-333, Cys-336, Cys-341, Cys-345, His-353, and Cys-357. The MYND-type zinc finger occupies 321-357 (CSVCGHPGAKKRCTQCKLAYCSQECQKFDWPIHKKVC).

In terms of tissue distribution, expressed in many ciliated sensory neurons.

Its subcellular location is the cell projection. The protein resides in the cilium. In terms of biological role, may be involved in the trafficking and dendritic transport of signaling proteins, such as the receptor-type guanylate cyclases gcy-12 and daf-11, to the cilia. In ciliated sensory neurons, required for the calcium flux to the cytoplasm in response to onset and removal of a nitric oxide (NO) stimulus and is thereby required for the behavioral avoidance response to NO-producing organisms like P.aeruginosa. This Caenorhabditis elegans protein is Dauer abnormal formation protein 25 (daf-25).